Reading from the N-terminus, the 426-residue chain is MAALNLSKRSICETCGHQGWKNSLVTCSKCRIACEHCYCMRESSFETSIHFVCADCSMRPVQNKFTSDSIKGVPRSIRNKVRVESSNPVPKWKKIPETSRMKLISPEEVKKLACGGSTSKPTFRVPRPVSARPPMGLTKPTAGFPRARSLNSTVVARKTKSIYLPPKKVEPLSPRTQQIRPGVMRQASKAQAVGEGSKSKVGDGAKYHDSNEICRSILSEKLLQLLPYRPALHPIWKGRIVDSATPSEFNGEFLAQPASKVRGKAYILSKAIPVLLKVKLVPIGNLLSGLFMNRKPGLSDVEMYIFPDDKNTKRFTAERDHIFEAMRIRNAMMKFNINGTPLLIFSSKLLDKSSQIIIKMQKKTNNFLWGIFLLTKKSLALLPGTSNQTPQHFDDGYVVDNDTEPFFRRYHRNCGKQLQRHYGQRD.

The PHD-type zinc finger occupies 9–59; it reads RSICETCGHQGWKNSLVTCSKCRIACEHCYCMRESSFETSIHFVCADCSMR. 8 residues coordinate Zn(2+): Cys12, Cys15, Cys27, Cys30, His36, Cys39, Cys53, and Cys56. Disordered regions lie at residues 122 to 144 and 185 to 205; these read TFRVPRPVSARPPMGLTKPTAGF and RQASKAQAVGEGSKSKVGDGA.

As to quaternary structure, interacts directly with AIPP3/BDT1.

Functionally, together with AIPP3/BDT1, cooperates to form a BAH-PHD bivalent histone reader complex able to read histone H3 lysine 27 trimethylation (H3K27me3) histone marks in order to regulate transcription, especially to prevent early flowering; promotes AIPP3/BDT1 binding to H3K27me3. The sequence is that of PHD finger-containing protein 6 from Arabidopsis thaliana (Mouse-ear cress).